Reading from the N-terminus, the 120-residue chain is Large ribosomal subunit protein bL20 (120 aa).

It belongs to the bacterial ribosomal protein bL20 family.

In terms of biological role, binds directly to 23S ribosomal RNA and is necessary for the in vitro assembly process of the 50S ribosomal subunit. It is not involved in the protein synthesizing functions of that subunit. The sequence is that of Large ribosomal subunit protein bL20 from Blochmanniella pennsylvanica (strain BPEN).